A 122-amino-acid polypeptide reads, in one-letter code: Photosystem II extrinsic protein U (122 aa).

Positions 1 to 30 are cleaved as a signal peptide; sequence MRWLLSILVRVVLVLCLCFAPLGIPVVARA.

It belongs to the PsbU family. In terms of assembly, PSII is composed of 1 copy each of membrane proteins PsbA, PsbB, PsbC, PsbD, PsbE, PsbF, PsbH, PsbI, PsbJ, PsbK, PsbL, PsbM, PsbT, PsbX, PsbY, PsbZ, Psb30/Ycf12, peripheral proteins PsbO, CyanoQ (PsbQ), PsbU, PsbV and a large number of cofactors. It forms dimeric complexes.

It is found in the cellular thylakoid membrane. Its function is as follows. One of the extrinsic, lumenal subunits of photosystem II (PSII). PSII is a light-driven water plastoquinone oxidoreductase, using light energy to abstract electrons from H(2)O, generating a proton gradient subsequently used for ATP formation. The extrinsic proteins stabilize the structure of photosystem II oxygen-evolving complex (OEC), the ion environment of oxygen evolution and protect the OEC against heat-induced inactivation. The polypeptide is Photosystem II extrinsic protein U (Synechococcus sp. (strain JA-2-3B'a(2-13)) (Cyanobacteria bacterium Yellowstone B-Prime)).